The primary structure comprises 527 residues: T-complex protein 1 subunit beta (527 aa).

It belongs to the TCP-1 chaperonin family. Heterooligomeric complex of about 850 to 900 kDa that forms two stacked rings, 12 to 16 nm in diameter.

It localises to the cytoplasm. In terms of biological role, molecular chaperone; assists the folding of proteins upon ATP hydrolysis. Known to play a role, in vitro, in the folding of actin and tubulin. The polypeptide is T-complex protein 1 subunit beta (Arabidopsis thaliana (Mouse-ear cress)).